A 1182-amino-acid chain; its full sequence is DNA-directed RNA polymerase subunit beta' (1182 aa).

Zn(2+)-binding residues include C59, C61, C74, and C77. The Mg(2+) site is built by D449, D451, and D453. Zn(2+) contacts are provided by C794, C868, C875, and C878.

This sequence belongs to the RNA polymerase beta' chain family. The RNAP catalytic core consists of 2 alpha, 1 beta, 1 beta' and 1 omega subunit. When a sigma factor is associated with the core the holoenzyme is formed, which can initiate transcription. Requires Mg(2+) as cofactor. It depends on Zn(2+) as a cofactor.

It carries out the reaction RNA(n) + a ribonucleoside 5'-triphosphate = RNA(n+1) + diphosphate. DNA-dependent RNA polymerase catalyzes the transcription of DNA into RNA using the four ribonucleoside triphosphates as substrates. The sequence is that of DNA-directed RNA polymerase subunit beta' from Clostridium acetobutylicum (strain ATCC 824 / DSM 792 / JCM 1419 / IAM 19013 / LMG 5710 / NBRC 13948 / NRRL B-527 / VKM B-1787 / 2291 / W).